Reading from the N-terminus, the 362-residue chain is MARLRDCLPRLMLTLRSLLFWSLVYCYCGLCASIHLLKLLWSLGKGPAQTFRRPAREHPPACLSDPSLGTHCYVRIKDSGLRFHYVAAGERGKPLMLLLHGFPEFWYSWRYQLREFKSEYRVVALDLRGYGETDAPIHRQNYKLDCLITDIKDILDSLGYSKCVLIGHDWGGMIAWLIAICYPEMVMKLIVINFPHPNVFTEYILRHPAQLLKSSYYYFFQIPWFPEFMFSINDFKVLKHLFTSHSTGIGRKGCQLTTEDLEAYIYVFSQPGALSGPINHYRNIFSCLPLKHHMVTTPTLLLWGENDAFMEVEMAEVTKIYVKNYFRLTILSEASHWLQQDQPDIVNKLIWTFLKEETRKKD.

A helical; Signal-anchor for type II membrane protein membrane pass occupies residues 17-37 (SLLFWSLVYCYCGLCASIHLL). Residues 94–211 (PLMLLLHGFP…EYILRHPAQL (118 aa)) enclose the AB hydrolase-1 domain. Catalysis depends on D169, which acts as the Nucleophile. The active-site Proton donor is the Y281. H336 serves as the catalytic Proton acceptor.

This sequence belongs to the AB hydrolase superfamily. Epoxide hydrolase family.

The protein localises to the membrane. In Homo sapiens (Human), this protein is Epoxide hydrolase 4 (EPHX4).